Reading from the N-terminus, the 449-residue chain is MNLNQIENVYFIGIGGIGMSALARYFKYIGKKVSGYDKTPSMLTSELIESGIDIHFEDNINLIPSNYYVENTLVIFTPAVPASHSEWHYFIERNYQIKKRAEVLGIITKDTFSFAVAGTHGKTTTSSILGHILHQSGADVTAFVGGIVENYNSNLIGTGKTVTVVEADEFDRSFLHLHPDIACVTSMDADHLDIYGTSDAIQASFIEFASKVEDKSKLFITKELPLEGVQCAINEDAVYKAYNVRIEDGNYVFDVQTPSEIMKDLRFGLPGKHNLMNGLMAIAMAKTYGTPTDAIAKAIASFNGIRRRFSYQIKSDKLVYIDDYAHHPTEINAVHQAVRELYPGRKVLAVFQPHLFSRTRDFADGFAESLSQFDEVFLMDIYPARELPMEGITSQWLLDKMTNPNRKIVAKEDLLAEIKASDAPIIVTIGAGDIGEMVPSIKKMLNENI.

118–124 (GTHGKTT) serves as a coordination point for ATP.

This sequence belongs to the MurCDEF family.

It is found in the cytoplasm. It carries out the reaction UDP-N-acetyl-alpha-D-muramate + L-alanine + ATP = UDP-N-acetyl-alpha-D-muramoyl-L-alanine + ADP + phosphate + H(+). It functions in the pathway cell wall biogenesis; peptidoglycan biosynthesis. Cell wall formation. This is UDP-N-acetylmuramate--L-alanine ligase from Flavobacterium johnsoniae (strain ATCC 17061 / DSM 2064 / JCM 8514 / BCRC 14874 / CCUG 350202 / NBRC 14942 / NCIMB 11054 / UW101) (Cytophaga johnsonae).